Reading from the N-terminus, the 200-residue chain is Lipopolysaccharide core heptose(II)-phosphate phosphatase (200 aa).

An N-terminal signal peptide occupies residues 1-25 (MLAFCRSSLKSKKYFIILLALAAIA).

Belongs to the phosphoglycerate mutase family. Ais subfamily.

The protein localises to the periplasm. It functions in the pathway bacterial outer membrane biogenesis; lipopolysaccharide metabolism. Catalyzes the dephosphorylation of heptose(II) of the outer membrane lipopolysaccharide core. This Escherichia coli O157:H7 protein is Lipopolysaccharide core heptose(II)-phosphate phosphatase.